An 844-amino-acid polypeptide reads, in one-letter code: RPA-related protein RADX (844 aa).

The OB DNA-binding region spans 228–331 (WHNRKNFPAL…LISTMEICLN (104 aa)). Disordered stretches follow at residues 571-609 (PASE…RPMD) and 626-664 (GPTA…TGKS). Residues 572–587 (ASETLQNASPPSTSQA) are compositionally biased toward polar residues. A compositionally biased stretch (basic and acidic residues) spans 590 to 608 (KEGHYHERGSKRSQDDRPM). Positions 652–662 (SRENSTANATG) are enriched in polar residues.

It localises to the chromosome. Its function is as follows. Single-stranded DNA-binding protein recruited to replication forks to maintain genome stability. Prevents fork collapse by antagonizing the accumulation of RAD51 at forks to ensure the proper balance of fork remodeling and protection without interfering with the capacity of cells to complete homologous recombination of double-strand breaks. The polypeptide is RPA-related protein RADX (Rattus norvegicus (Rat)).